The chain runs to 396 residues: Probable glucan endo-1,6-beta-glucosidase B (396 aa).

Residues 1-17 form the signal peptide; sequence MIRRLAAFSALSGLATA. An N-linked (GlcNAc...) asparagine glycan is attached at N30. E219 functions as the Proton donor in the catalytic mechanism. A glycan (N-linked (GlcNAc...) asparagine) is linked at N272. E320 acts as the Nucleophile in catalysis.

The protein belongs to the glycosyl hydrolase 5 (cellulase A) family.

Its subcellular location is the secreted. The enzyme catalyses Random hydrolysis of (1-&gt;6)-linkages in (1-&gt;6)-beta-D-glucans.. Beta-glucanases participate in the metabolism of beta-glucan, the main structural component of the cell wall. Acts on lutean, pustulan and 1,6-oligo-beta-D-glucosides. In Aspergillus fumigatus (strain CBS 144.89 / FGSC A1163 / CEA10) (Neosartorya fumigata), this protein is Probable glucan endo-1,6-beta-glucosidase B (exgB).